Reading from the N-terminus, the 349-residue chain is Phosphoribosylformylglycinamidine cyclo-ligase (349 aa).

The protein belongs to the AIR synthase family.

Its subcellular location is the cytoplasm. It catalyses the reaction 2-formamido-N(1)-(5-O-phospho-beta-D-ribosyl)acetamidine + ATP = 5-amino-1-(5-phospho-beta-D-ribosyl)imidazole + ADP + phosphate + H(+). Its pathway is purine metabolism; IMP biosynthesis via de novo pathway; 5-amino-1-(5-phospho-D-ribosyl)imidazole from N(2)-formyl-N(1)-(5-phospho-D-ribosyl)glycinamide: step 2/2. The polypeptide is Phosphoribosylformylglycinamidine cyclo-ligase (Methanococcus maripaludis (strain DSM 14266 / JCM 13030 / NBRC 101832 / S2 / LL)).